Consider the following 106-residue polypeptide: Small ribosomal subunit protein uS17 (106 aa).

Belongs to the universal ribosomal protein uS17 family. As to quaternary structure, part of the 30S ribosomal subunit.

Functionally, one of the primary rRNA binding proteins, it binds specifically to the 5'-end of 16S ribosomal RNA. This chain is Small ribosomal subunit protein uS17, found in Picrophilus torridus (strain ATCC 700027 / DSM 9790 / JCM 10055 / NBRC 100828 / KAW 2/3).